The chain runs to 408 residues: 8-amino-7-oxononanoate synthase (408 aa).

Residue Arg-20 coordinates substrate. Gly-119–Tyr-120 provides a ligand contact to pyridoxal 5'-phosphate. His-144 contributes to the substrate binding site. Pyridoxal 5'-phosphate-binding residues include Ser-190, His-218, and Thr-246. An N6-(pyridoxal phosphate)lysine modification is found at Lys-249. Position 372 (Thr-372) interacts with substrate.

Belongs to the class-II pyridoxal-phosphate-dependent aminotransferase family. BioF subfamily. As to quaternary structure, homodimer. The cofactor is pyridoxal 5'-phosphate.

It catalyses the reaction 6-carboxyhexanoyl-[ACP] + L-alanine + H(+) = (8S)-8-amino-7-oxononanoate + holo-[ACP] + CO2. It functions in the pathway cofactor biosynthesis; biotin biosynthesis. Catalyzes the decarboxylative condensation of pimeloyl-[acyl-carrier protein] and L-alanine to produce 8-amino-7-oxononanoate (AON), [acyl-carrier protein], and carbon dioxide. The chain is 8-amino-7-oxononanoate synthase from Leptothrix cholodnii (strain ATCC 51168 / LMG 8142 / SP-6) (Leptothrix discophora (strain SP-6)).